A 62-amino-acid polypeptide reads, in one-letter code: Bacteriocin pediocin PA-1 (62 aa).

Residues 1 to 18 (MKKIEKLTEKEMANIIGG) constitute a propeptide that is removed on maturation. Cystine bridges form between Cys27/Cys32 and Cys42/Cys62. The segment at 40–52 (TTCIINNGAMAWA) is hydrophobic.

This sequence belongs to the bacteriocin class IIA/YGNGV family.

It is found in the secreted. Its function is as follows. Bactericidal activity (effective inhibitor of L.monocytogenes). The sequence is that of Bacteriocin pediocin PA-1 (pedA) from Pediococcus acidilactici.